A 426-amino-acid chain; its full sequence is Tryptophan--tRNA ligase (426 aa).

The short motif at 66–74 (PSGEMHLGN) is the 'HIGH' region element. Positions 314–318 (KMSSS) match the 'KMSKS' region motif.

The protein belongs to the class-I aminoacyl-tRNA synthetase family.

It localises to the cytoplasm. The enzyme catalyses tRNA(Trp) + L-tryptophan + ATP = L-tryptophyl-tRNA(Trp) + AMP + diphosphate + H(+). The polypeptide is Tryptophan--tRNA ligase (Thermoplasma volcanium (strain ATCC 51530 / DSM 4299 / JCM 9571 / NBRC 15438 / GSS1)).